The chain runs to 82 residues: ATP synthase subunit c, chloroplastic (82 aa).

A run of 2 helical transmembrane segments spans residues 3-23 (PLIA…AAIG) and 57-77 (FAFM…LLFA).

The protein belongs to the ATPase C chain family. In terms of assembly, F-type ATPases have 2 components, F(1) - the catalytic core - and F(0) - the membrane proton channel. F(1) has five subunits: alpha(3), beta(3), gamma(1), delta(1), epsilon(1). F(0) has four main subunits: a(1), b(1), b'(1) and c(10-14). The alpha and beta chains form an alternating ring which encloses part of the gamma chain. F(1) is attached to F(0) by a central stalk formed by the gamma and epsilon chains, while a peripheral stalk is formed by the delta, b and b' chains.

It localises to the plastid. It is found in the chloroplast thylakoid membrane. Its function is as follows. F(1)F(0) ATP synthase produces ATP from ADP in the presence of a proton or sodium gradient. F-type ATPases consist of two structural domains, F(1) containing the extramembraneous catalytic core and F(0) containing the membrane proton channel, linked together by a central stalk and a peripheral stalk. During catalysis, ATP synthesis in the catalytic domain of F(1) is coupled via a rotary mechanism of the central stalk subunits to proton translocation. Functionally, key component of the F(0) channel; it plays a direct role in translocation across the membrane. A homomeric c-ring of between 10-14 subunits forms the central stalk rotor element with the F(1) delta and epsilon subunits. This chain is ATP synthase subunit c, chloroplastic, found in Oltmannsiellopsis viridis (Marine flagellate).